The following is a 179-amino-acid chain: Large ribosomal subunit protein uL5 (179 aa).

The protein belongs to the universal ribosomal protein uL5 family. In terms of assembly, part of the 50S ribosomal subunit; part of the 5S rRNA/L5/L18/L25 subcomplex. Contacts the 5S rRNA and the P site tRNA. Forms a bridge to the 30S subunit in the 70S ribosome.

This is one of the proteins that bind and probably mediate the attachment of the 5S RNA into the large ribosomal subunit, where it forms part of the central protuberance. In the 70S ribosome it contacts protein S13 of the 30S subunit (bridge B1b), connecting the 2 subunits; this bridge is implicated in subunit movement. Contacts the P site tRNA; the 5S rRNA and some of its associated proteins might help stabilize positioning of ribosome-bound tRNAs. The protein is Large ribosomal subunit protein uL5 of Bordetella petrii (strain ATCC BAA-461 / DSM 12804 / CCUG 43448).